Here is a 540-residue protein sequence, read N- to C-terminus: Probable LRR receptor-like serine/threonine-protein kinase RPK1 (540 aa).

A signal peptide spans M1–S19. Residues R20–E198 lie on the Extracellular side of the membrane. LRR repeat units lie at residues L118–L142 and K144–K169. The helical transmembrane segment at I199–F219 threads the bilayer. Over I220 to L540 the chain is Cytoplasmic. Residues T250 and T258 each carry the phosphothreonine modification. In terms of domain architecture, Protein kinase spans F261 to I535. ATP-binding positions include I267–T275 and K289. Y334 and Y372 each carry phosphotyrosine. Catalysis depends on D385, which acts as the Proton acceptor. Y427 carries the post-translational modification Phosphotyrosine. Phosphothreonine is present on T435.

Belongs to the protein kinase superfamily. Ser/Thr protein kinase family. In terms of tissue distribution, expressed in roots, stems, leaves, and flowers.

The protein localises to the cell membrane. The enzyme catalyses L-seryl-[protein] + ATP = O-phospho-L-seryl-[protein] + ADP + H(+). The catalysed reaction is L-threonyl-[protein] + ATP = O-phospho-L-threonyl-[protein] + ADP + H(+). Its function is as follows. Involved in the main abscisic acid-mediated (ABA) signaling pathway and in early ABA perception. Together with RPK2, required for pattern formation along the radial axis (e.g. the apical embryonic domain cell types that generate cotyledon primordia), and the apical-basal axis (e.g. differentiation of the basal pole during early embryogenesis). This chain is Probable LRR receptor-like serine/threonine-protein kinase RPK1 (RPK1), found in Arabidopsis thaliana (Mouse-ear cress).